Here is a 507-residue protein sequence, read N- to C-terminus: Histidine ammonia-lyase (507 aa).

Positions 141–143 (ASG) form a cross-link, 5-imidazolinone (Ala-Gly). Residue serine 142 is modified to 2,3-didehydroalanine (Ser).

The protein belongs to the PAL/histidase family. Contains an active site 4-methylidene-imidazol-5-one (MIO), which is formed autocatalytically by cyclization and dehydration of residues Ala-Ser-Gly.

Its subcellular location is the cytoplasm. The enzyme catalyses L-histidine = trans-urocanate + NH4(+). It functions in the pathway amino-acid degradation; L-histidine degradation into L-glutamate; N-formimidoyl-L-glutamate from L-histidine: step 1/3. The sequence is that of Histidine ammonia-lyase from Burkholderia mallei (strain NCTC 10247).